Here is a 928-residue protein sequence, read N- to C-terminus: MGGSASSQLDEGKCAYIRGKTEAAIKNFSPYYSRQYSVAFCNHVRTEVEQQRDLTSQFLKTKPPLAPGTILYEAELSQFSEDIKKWKERYVVVKNDYAVESYENKEAYQRGAAPKCRILPAGGKVLTSEDEYNLLSDRHFPDPLASSEKENTQPFVVLPKEFPVYLWQPFFRHGYFCFHEAADQKRFSALLSDCVRHLNHDYMKQMTFEAQAFLEAVQFFRQEKGHYGSWEMITGDEIQILSNLVMEELLPTLQTDLLPKMKGKKNDRKRTWLGLLEEAYTLVQHQVSEGLSALKEECRALTKGLEGTIRSDMDQIVNSKNYLIGKIKAMVAQPAEKSCLESVQPFLASILEELMGPVSSGFSEVRVLFEKEVNEVSQNFQTTKDSVQLKEHLDRLMNLPLHSVKMEPCYTKVNLLHERLQDLKSRFRFPHIDLVVQRTQNYMQELMENAVFTFEQLLSPHLQGEASKTAVAIEKVKLRVLKQYDYDSSTIRKKIFQEALVQITLPTVQKALASTCKPELQKYEQFIFADHTNMIHVENVYEEILHQILLDETLKVIKEAAILKKHNLFEDNMALPSESVSSLTDLKPPTGSNQASPARRASAILPGVLGSETLSNEVFQESEEEKQPEVPSSLAKGESLSLPGPSPPPDGTEQVIISRVDDPVVNPVATEDTAGLPGTCSSELEFGGTLEDEEPAQEEPEPITASGSLKALRKLLTASVEVPVDSAPVMEEDTNGESHVPQENEEEEEKEPSQAAAIHPDNCEESEVSEREAQPPCPEAHGEELGGFPEVGSPASPPASGGLTEEPLGPMEGELPGEACTLTAHEGRGGKCTEEGDASQQEGCTLGSDPICLSESQVSEEQEEMGGQSSAAQATASVNAEEIKVARIHECQWVVEDAPNPDVLLSHKDDVKEGEGGQESFPELPSEE.

The N-myristoyl glycine moiety is linked to residue G2. S579, S582, S596, S602, and S646 each carry phosphoserine. Residues 580-596 show a composition bias toward polar residues; the sequence is VSSLTDLKPPTGSNQAS. The segment at 580 to 600 is disordered; it reads VSSLTDLKPPTGSNQASPARR. Disordered regions lie at residues 618–654 and 669–707; these read VFQE…GTEQ and ATED…TASG. Residues 690-701 are compositionally biased toward acidic residues; it reads LEDEEPAQEEPE. The residue at position 708 (S708) is a Phosphoserine. Disordered stretches follow at residues 723-877 and 899-928; these read PVDS…ATAS and PNPD…PSEE. A compositionally biased stretch (low complexity) spans 801–818; it reads GGLTEEPLGPMEGELPGE. Residues 825–834 are compositionally biased toward basic and acidic residues; sequence HEGRGGKCTE. Low complexity predominate over residues 865-877; sequence MGGQSSAAQATAS. Positions 905–915 are enriched in basic and acidic residues; that stretch reads LSHKDDVKEGE. S926 bears the Phosphoserine mark.

It belongs to the Niban family. Expressed in various types of thyroid tumor such as papillary thyroid carcinomas and oxyphilic thyroid tumors but not in normal thyroid tissue (at protein level). Strongly expressed in heart, skeletal muscle, pancreas, white blood cells and prostate with moderate expression in colon and spleen. Expressed in renal carcinoma cells but not in normal kidney.

The protein localises to the cytoplasm. It is found in the membrane. Its function is as follows. Regulates phosphorylation of a number of proteins involved in translation regulation including EIF2A, EIF4EBP1 and RPS6KB1. May be involved in the endoplasmic reticulum stress response. The chain is Protein Niban 1 from Homo sapiens (Human).